The following is a 212-amino-acid chain: UPF0502 protein ECA2523 (212 aa).

Belongs to the UPF0502 family.

This Pectobacterium atrosepticum (strain SCRI 1043 / ATCC BAA-672) (Erwinia carotovora subsp. atroseptica) protein is UPF0502 protein ECA2523.